The chain runs to 947 residues: Netrin receptor unc-5 (947 aa).

Residues 43–141 (VIRNKPLRLQ…VHLAYMRKHF (99 aa)) form the Ig-like domain. Cystine bridges form between cysteine 53–cysteine 112, cysteine 160–cysteine 209, cysteine 243–cysteine 295, cysteine 247–cysteine 299, and cysteine 273–cysteine 285. In terms of domain architecture, Ig-like C2-type spans 139–226 (KHFLKSPVAQ…SRKTDPVEVQ (88 aa)). Asparagine 206 is a glycosylation site (N-linked (GlcNAc...) asparagine). TSP type-1 domains are found at residues 230–300 (DGGW…VPCK) and 302–354 (DGGW…QLCT). C-linked (Man) tryptophan glycans are attached at residues tryptophan 305 and tryptophan 308. The helical transmembrane segment at 369-389 (GSVASIFIVASFILAILAMFC) threads the bilayer. The Cytoplasmic portion of the chain corresponds to 390-947 (CKRGNSKKSK…LSAFPQIVSP (558 aa)). Tyrosine 510 carries the post-translational modification Phosphotyrosine. The 129-residue stretch at 530 to 658 (NIVAAQIDSN…LNTNMFVQFE (129 aa)) folds into the ZU5 domain. In terms of domain architecture, Death spans 857 to 938 (ELARLLDMPN…DAVMVLERFL (82 aa)).

This sequence belongs to the unc-5 family. As to quaternary structure, interacts (via cytoplasmic domain) with src-1 (via SH2 domain and SH3 domain). Interacts with madd-4. Interacts with unc-129; the interaction is direct. Phosphorylated on different cytoplasmic tyrosine residues. May be phosphorylated on tyrosine residues by src-1. Tyrosine phosphorylation is unc-6-dependent. In terms of processing, glycosylated via C-mannosylation by dpy-19 at Trp-305 and Trp-308. As to expression, expressed in cell bodies and axons of the VNC motor neurons that extend axons to the dorsal midline and within the ventral nerve cord. Expressed in gonadal distal tip cells (DTC).

It is found in the cell membrane. Its subcellular location is the membrane raft. It localises to the cell projection. The protein resides in the neuron projection. Functionally, receptor for netrin (unc-6) required for axon guidance. Mediates axon repulsion of neuronal growth cones in the developing nervous system upon ligand binding. Axon migration is mediated by the secreted unc-6, which promotes attraction of neurons and axons through binding to the unc-40 receptor, while repulsion requires both unc-5 and unc-40 receptors. Involved in the ventral-dorsal and anterior-posterior migration of distal tip cells along the body, which may be mediated by Wnt receptor mom-5, ced-10/Rac, ced-12/ELMO and mig-2/RhoG. The protein is Netrin receptor unc-5 of Caenorhabditis elegans.